The sequence spans 190 residues: uncharacterized protein (190 aa).

Positions 1–18 are cleaved as a signal peptide; it reads MKLVHMASGLAVAIALAA. Cys-19 carries N-palmitoyl cysteine lipidation. A lipid anchor (S-diacylglycerol cysteine) is attached at Cys-19. A compositionally biased stretch (low complexity) spans 162-182; it reads ASGGATTTVPSTSPTQVNPSS. Positions 162 to 190 are disordered; the sequence is ASGGATTTVPSTSPTQVNPSSAVPAPTQY.

The protein localises to the cell membrane. This is an uncharacterized protein from Escherichia coli (strain K12).